A 511-amino-acid chain; its full sequence is Glutamate/gamma-aminobutyrate antiporter (511 aa).

At 1 to 13 (MATSVQTGKAKQL) the chain is on the cytoplasmic side. A helical transmembrane segment spans residues 14–36 (TLLGFFAITASMVMAVYEYPTFA). Residues 37–40 (TSGF) are Periplasmic-facing. The chain crosses the membrane as a helical span at residues 41-64 (SLVFFLLLGGILWFIPVGLCAAEM). Over 65 to 85 (ATVDGWEEGGVFAWVSNTLGP) the chain is Cytoplasmic. The chain crosses the membrane as a helical span at residues 86-112 (RWGFAAISFGYLQIAIGFIPMLYFVLG). At 113–126 (ALSYILKWPALNED) the chain is on the periplasmic side. Residues 127–147 (PITKTIAALIILWALALTQFG) traverse the membrane as a helical segment. At 148–151 (GTKY) the chain is on the cytoplasmic side. A helical membrane pass occupies residues 152 to 180 (TARIAKVGFFAGILLPAFILIALAAIYLH). Over 181 to 201 (SGAPVAIEMDSKTFFPDFSKV) the chain is Periplasmic. The helical transmembrane segment at 202-225 (GTLVVFVAFILSYMGVEASATHVN) threads the bilayer. Over 226-229 (EMSN) the chain is Cytoplasmic. A helical membrane pass occupies residues 230 to 259 (PGRDYPLAMLLLMVAAICLSSVGGLSIAMV). The Periplasmic portion of the chain corresponds to 260–288 (IPGNEINLSAGVMQTFTVLMSHVAPEIEW). Residues 289–322 (TVRVISALLLLGVLAEIASWIVGPSRGMYVTAQK) form a helical membrane-spanning segment. The Cytoplasmic segment spans residues 323–337 (NLLPAAFAKMNKNGV). The helical transmembrane segment at 338–359 (PVTLVISQLVITSIALIILTNT) threads the bilayer. Residues 360-362 (GGG) are Periplasmic-facing. A helical transmembrane segment spans residues 363–396 (NNMSFLIALALTVVIYLCAYFMLFIGYIVLVLKH). The Cytoplasmic segment spans residues 397–409 (PDLKRTFNIPGGK). Residues 410–430 (GVKLVVAIVGLLTSIMAFIVS) form a helical membrane-spanning segment. The Periplasmic segment spans residues 431 to 443 (FLPPDNIQGDSTD). The helical transmembrane segment at 444–467 (MYVELLVVSFLVVLALPFILYAVH) threads the bilayer. Over 468–511 (DRKGKANTGVTLEPINSQNAPKGHFFLHPRARSPHYIVMNDKKH) the chain is Cytoplasmic.

The protein belongs to the amino acid-polyamine-organocation (APC) superfamily. Glutamate:GABA antiporter (GGA) (TC 2.A.3.7) family. Monomer.

The protein resides in the cell inner membrane. The enzyme catalyses 4-aminobutanoate(in) + L-glutamate(out) = 4-aminobutanoate(out) + L-glutamate(in). Shows pH-dependent activity. The Glu/GABA transport activity is robust at pH 4.5 and rapidly decreases with increasing pH, with no detectable activity at pH 6.5 or above. The Glu analog L-trans-pyrrolidine-2,4-dicarboxylic acid (L-PDC) blocks the uptake of glutamate by selective inhibition. In terms of biological role, involved in glutaminase-dependent acid resistance. Exchanges extracellular glutamate (Glu) for intracellular gamma-aminobutyric acid (GABA) under acidic conditions. The protonation states of substrates are crucial for transport. Selectively transports Glu with no net charge and GABA with a positive charge. Also efficiently transports glutamine and, to a smaller extent, methionine and leucine. When the extracellular pH drops below 2.5, can import L-glutamine and export either glutamate or GABA. The ability to survive the extremely acidic conditions of the stomach is essential for successful colonization of the host by commensal and pathogenic bacteria. This Escherichia coli (strain K12) protein is Glutamate/gamma-aminobutyrate antiporter.